An 84-amino-acid chain; its full sequence is Cell division topological specificity factor (84 aa).

It belongs to the MinE family.

In terms of biological role, prevents the cell division inhibition by proteins MinC and MinD at internal division sites while permitting inhibition at polar sites. This ensures cell division at the proper site by restricting the formation of a division septum at the midpoint of the long axis of the cell. This is Cell division topological specificity factor from Hydrogenovibrio crunogenus (strain DSM 25203 / XCL-2) (Thiomicrospira crunogena).